A 296-amino-acid chain; its full sequence is mRNA 3'-end-processing protein RNA15 (296 aa).

In terms of domain architecture, RRM spans 18–96 (RVVYLGSIPY…RFLKCGYSSN (79 aa)). The disordered stretch occupies residues 99-140 (ISGVSQQQQQQYNNINGNNNNNGNNNNNSNGPDFQNSGNANF). Positions 100–135 (SGVSQQQQQQYNNINGNNNNNGNNNNNSNGPDFQNS) are enriched in low complexity.

Component of the CFIA complex, which is composed of RNA14, RNA15, PCF11 and CLP1. Interacts directly with RNA14. Interacts with polyadenylate-binding protein PAB1.

The protein resides in the nucleus. Its function is as follows. RNA-binding component of the cleavage factor IA (CFIA) complex, which is involved in the endonucleolytic cleavage during polyadenylation-dependent pre-mRNA 3'-end formation and cooperates with the cleavage factor NAB4/CFIB and the cleavage and polyadenylation factor (CPF) complex. Binds to A-rich RNA sequence elements. This is mRNA 3'-end-processing protein RNA15 (RNA15) from Saccharomyces cerevisiae (strain ATCC 204508 / S288c) (Baker's yeast).